The sequence spans 206 residues: Isopentenyl-diphosphate Delta-isomerase (206 aa).

Residues histidine 44 and histidine 51 each contribute to the Mn(2+) site. Positions alanine 49–leucine 183 constitute a Nudix hydrolase domain. Cysteine 86 is a catalytic residue. Cysteine 86 provides a ligand contact to Mg(2+). Position 88 (histidine 88) interacts with Mn(2+). Glutamate 106 provides a ligand contact to Mg(2+). The Mn(2+) site is built by glutamate 133 and glutamate 135. The active site involves glutamate 135.

This sequence belongs to the IPP isomerase type 1 family. Mg(2+) serves as cofactor. Mn(2+) is required as a cofactor.

The protein resides in the cytoplasm. The catalysed reaction is isopentenyl diphosphate = dimethylallyl diphosphate. The protein operates within isoprenoid biosynthesis; dimethylallyl diphosphate biosynthesis; dimethylallyl diphosphate from isopentenyl diphosphate: step 1/1. Functionally, catalyzes the 1,3-allylic rearrangement of the homoallylic substrate isopentenyl (IPP) to its highly electrophilic allylic isomer, dimethylallyl diphosphate (DMAPP). This Agromyces mediolanus (Corynebacterium mediolanum) protein is Isopentenyl-diphosphate Delta-isomerase.